A 332-amino-acid polypeptide reads, in one-letter code: L-lactate dehydrogenase A chain (332 aa).

NAD(+)-binding positions include 29–57 (GAVG…VEDK) and arginine 99. Residues arginine 106, asparagine 138, and arginine 169 each contribute to the substrate site. An NAD(+)-binding site is contributed by asparagine 138. Histidine 193 serves as the catalytic Proton acceptor. Threonine 248 serves as a coordination point for substrate.

It belongs to the LDH/MDH superfamily. LDH family. Homotetramer.

The protein localises to the cytoplasm. The catalysed reaction is (S)-lactate + NAD(+) = pyruvate + NADH + H(+). It functions in the pathway fermentation; pyruvate fermentation to lactate; (S)-lactate from pyruvate: step 1/1. Functionally, interconverts simultaneously and stereospecifically pyruvate and lactate with concomitant interconversion of NADH and NAD(+). The chain is L-lactate dehydrogenase A chain (LDHA) from Columba livia (Rock dove).